A 443-amino-acid chain; its full sequence is Protein king tubby (443 aa).

Disordered stretches follow at residues 57–85 (TNGS…LSTI) and 98–189 (HELE…ESEG). Residues 68–85 (AVNTSRNHSNNMRSLSTI) are compositionally biased toward polar residues. Low complexity predominate over residues 113 to 128 (QHQQSASHSANSTQSQ). Position 136 is a phosphoserine (serine 136). Residues 148-160 (NRNVAAAAPVRPA) show a composition bias toward low complexity. Over residues 177–186 (NGTGNGTGGE) the composition is skewed to gly residues.

Belongs to the TUB family.

The protein localises to the cytoplasm. It is found in the nucleus. Its subcellular location is the cell projection. The protein resides in the cilium membrane. It localises to the rhabdomere. This chain is Protein king tubby, found in Drosophila yakuba (Fruit fly).